A 250-amino-acid polypeptide reads, in one-letter code: Phosphoribosylaminoimidazole-succinocarboxamide synthase (250 aa).

The protein belongs to the SAICAR synthetase family.

The catalysed reaction is 5-amino-1-(5-phospho-D-ribosyl)imidazole-4-carboxylate + L-aspartate + ATP = (2S)-2-[5-amino-1-(5-phospho-beta-D-ribosyl)imidazole-4-carboxamido]succinate + ADP + phosphate + 2 H(+). It functions in the pathway purine metabolism; IMP biosynthesis via de novo pathway; 5-amino-1-(5-phospho-D-ribosyl)imidazole-4-carboxamide from 5-amino-1-(5-phospho-D-ribosyl)imidazole-4-carboxylate: step 1/2. The protein is Phosphoribosylaminoimidazole-succinocarboxamide synthase of Picosynechococcus sp. (strain ATCC 27264 / PCC 7002 / PR-6) (Agmenellum quadruplicatum).